An 81-amino-acid chain; its full sequence is UPF0386 protein Smed_0945 (81 aa).

The protein belongs to the UPF0386 family.

The chain is UPF0386 protein Smed_0945 from Sinorhizobium medicae (strain WSM419) (Ensifer medicae).